A 313-amino-acid polypeptide reads, in one-letter code: Protein-methionine-sulfoxide reductase catalytic subunit MsrP (313 aa).

The segment at residues 1 to 44 is a signal peptide (tat-type signal); the sequence is MARWRPDMAEREATPEALYLRRRDFLALGAAGAVGLLLPRGARA. Mo-molybdopterin contacts are provided by residues N76, 79–80, C134, T169, N217, R222, and 233–235; these read YE and GAK.

The protein belongs to the MsrP family. In terms of assembly, heterodimer of a catalytic subunit (MsrP) and a heme-binding subunit (MsrQ). Mo-molybdopterin serves as cofactor. In terms of processing, predicted to be exported by the Tat system. The position of the signal peptide cleavage has not been experimentally proven.

It localises to the periplasm. The catalysed reaction is L-methionyl-[protein] + a quinone + H2O = L-methionyl-(S)-S-oxide-[protein] + a quinol. It carries out the reaction L-methionyl-[protein] + a quinone + H2O = L-methionyl-(R)-S-oxide-[protein] + a quinol. In terms of biological role, part of the MsrPQ system that repairs oxidized periplasmic proteins containing methionine sulfoxide residues (Met-O), using respiratory chain electrons. Thus protects these proteins from oxidative-stress damage caused by reactive species of oxygen and chlorine generated by the host defense mechanisms. MsrPQ is essential for the maintenance of envelope integrity under bleach stress, rescuing a wide series of structurally unrelated periplasmic proteins from methionine oxidation. The catalytic subunit MsrP is non-stereospecific, being able to reduce both (R-) and (S-) diastereoisomers of methionine sulfoxide. This Anaeromyxobacter dehalogenans (strain 2CP-1 / ATCC BAA-258) protein is Protein-methionine-sulfoxide reductase catalytic subunit MsrP.